The primary structure comprises 247 residues: tRNA uridine(34) hydroxylase (247 aa).

The Rhodanese domain occupies 124–218; sequence TKQDVIVIDT…YLEDTQNKNN (95 aa). The active-site Cysteine persulfide intermediate is the Cys-178.

Belongs to the TrhO family.

The catalysed reaction is uridine(34) in tRNA + AH2 + O2 = 5-hydroxyuridine(34) in tRNA + A + H2O. Functionally, catalyzes oxygen-dependent 5-hydroxyuridine (ho5U) modification at position 34 in tRNAs. In Rickettsia rickettsii (strain Iowa), this protein is tRNA uridine(34) hydroxylase.